Here is a 126-residue protein sequence, read N- to C-terminus: Small ribosomal subunit protein uS13 (126 aa).

The interval 94–126 (RGLPVHGQRTSTNARTRKGPRRAIAGKKKPGKK) is disordered. Over residues 108-126 (RTRKGPRRAIAGKKKPGKK) the composition is skewed to basic residues.

It belongs to the universal ribosomal protein uS13 family. Part of the 30S ribosomal subunit. Forms a loose heterodimer with protein S19. Forms two bridges to the 50S subunit in the 70S ribosome.

Functionally, located at the top of the head of the 30S subunit, it contacts several helices of the 16S rRNA. In the 70S ribosome it contacts the 23S rRNA (bridge B1a) and protein L5 of the 50S subunit (bridge B1b), connecting the 2 subunits; these bridges are implicated in subunit movement. Contacts the tRNAs in the A and P-sites. The chain is Small ribosomal subunit protein uS13 from Streptomyces avermitilis (strain ATCC 31267 / DSM 46492 / JCM 5070 / NBRC 14893 / NCIMB 12804 / NRRL 8165 / MA-4680).